The chain runs to 396 residues: Elongation factor Tu (396 aa).

The 197-residue stretch at 10–206 (KEHVNIGTIG…AVDTWIETPV (197 aa)) folds into the tr-type G domain. Residues 19–26 (GHVDHGKT) form a G1 region. 19-26 (GHVDHGKT) contributes to the GTP binding site. A Mg(2+)-binding site is contributed by threonine 26. A G2 region spans residues 60 to 64 (GITIN). Residues 81–84 (DCPG) form a G3 region. Residues 81–85 (DCPGH) and 136–139 (NKCD) each bind GTP. A G4 region spans residues 136-139 (NKCD). Residues 176-178 (SAL) are G5.

Belongs to the TRAFAC class translation factor GTPase superfamily. Classic translation factor GTPase family. EF-Tu/EF-1A subfamily. Monomer.

The protein resides in the cytoplasm. The catalysed reaction is GTP + H2O = GDP + phosphate + H(+). GTP hydrolase that promotes the GTP-dependent binding of aminoacyl-tRNA to the A-site of ribosomes during protein biosynthesis. The polypeptide is Elongation factor Tu (Mycoplasmopsis agalactiae (strain NCTC 10123 / CIP 59.7 / PG2) (Mycoplasma agalactiae)).